The following is a 519-amino-acid chain: Ribonuclease Y 1 (519 aa).

The helical transmembrane segment at 2–22 threads the bilayer; it reads IILYIILAIIAIVVGYCAGFF. A disordered region spans residues 84–113; that stretch reads QKQEDRLLQREDSLDRKDNSFEKRENSLER. The KH domain maps to 209–294; sequence TITVVSLPND…EMVEKAKKEM (86 aa). The HD domain occupies 335 to 428; it reads VLNHSIEVAN…VAAANSISAA (94 aa).

The protein belongs to the RNase Y family.

The protein localises to the cell membrane. Functionally, endoribonuclease that initiates mRNA decay. In Pediococcus pentosaceus (strain ATCC 25745 / CCUG 21536 / LMG 10740 / 183-1w), this protein is Ribonuclease Y 1.